Reading from the N-terminus, the 198-residue chain is MYDYIKGQLTKITAKYIVVETNGLGYIINVANPYSFTDSVNQLVTIYLHQVIREDAHLLFGFHTEDEKDVFLKLISVSGIGPTTALAIVAVDDNEGLVNAIDNSDIKYLMKFPKIGKKTAQQMVLDLAGKFVEAPQETGNTKARSNKAGNTQLDEAIEALLALGYKAAELKKIRAFFEGTSETAEQYIKSALKLLMKG.

The segment at 1–63 (MYDYIKGQLT…EDAHLLFGFH (63 aa)) is domain I. A domain II region spans residues 64–142 (TEDEKDVFLK…EAPQETGNTK (79 aa)). The interval 143–147 (ARSNK) is flexible linker. Residues 148–198 (AGNTQLDEAIEALLALGYKAAELKKIRAFFEGTSETAEQYIKSALKLLMKG) are domain III.

This sequence belongs to the RuvA family. In terms of assembly, homotetramer. Forms an RuvA(8)-RuvB(12)-Holliday junction (HJ) complex. HJ DNA is sandwiched between 2 RuvA tetramers; dsDNA enters through RuvA and exits via RuvB. An RuvB hexamer assembles on each DNA strand where it exits the tetramer. Each RuvB hexamer is contacted by two RuvA subunits (via domain III) on 2 adjacent RuvB subunits; this complex drives branch migration. In the full resolvosome a probable DNA-RuvA(4)-RuvB(12)-RuvC(2) complex forms which resolves the HJ.

It localises to the cytoplasm. In terms of biological role, the RuvA-RuvB-RuvC complex processes Holliday junction (HJ) DNA during genetic recombination and DNA repair, while the RuvA-RuvB complex plays an important role in the rescue of blocked DNA replication forks via replication fork reversal (RFR). RuvA specifically binds to HJ cruciform DNA, conferring on it an open structure. The RuvB hexamer acts as an ATP-dependent pump, pulling dsDNA into and through the RuvAB complex. HJ branch migration allows RuvC to scan DNA until it finds its consensus sequence, where it cleaves and resolves the cruciform DNA. This chain is Holliday junction branch migration complex subunit RuvA, found in Streptococcus pyogenes serotype M28 (strain MGAS6180).